The sequence spans 347 residues: Homocysteine S-methyltransferase 3 (347 aa).

The Hcy-binding domain occupies 12-333; sequence LMTDFLEKCG…NTIRAIAKVL (322 aa). 3 residues coordinate Zn(2+): Cys251, Cys318, and Cys319.

In terms of assembly, monomer. Requires Zn(2+) as cofactor. Expressed predominantly in rosette leaves. Expressed in roots, cauline leaves and developing seeds.

It catalyses the reaction S-methyl-L-methionine + L-homocysteine = 2 L-methionine + H(+). In terms of biological role, catalyzes methyl transfer from S-methylmethionine (SMM) to adenosyl-L-homocysteine (AdoMet). SMM degradation (by HMT-1, HMT-2 and HMT-3) and biosynthesis (by MMT1) constitute the SMM cycle in plants, which is probably required to achieve short term control of AdoMet level. The chain is Homocysteine S-methyltransferase 3 (HMT3) from Arabidopsis thaliana (Mouse-ear cress).